We begin with the raw amino-acid sequence, 103 residues long: Protein SUP-1 (103 aa).

Residues 1–16 (MMSYIALAACIGLAMA) form the signal peptide. Topologically, residues 17–75 (ANVDHDVKSAVNEVTTTKDGDTYCPVPLVGTKCGTSSIFHYWKCCGELNKECCFNLQTW) are extracellular. Residues 76-96 (VWVTLALFGVIFIASFVISLV) form a helical membrane-spanning segment. Residues 97-103 (RCICCRK) are Cytoplasmic-facing.

Expressed in a subset of neurons and in body wall muscles. In the nervous system, expressed specifically in cholinergic motor neurons of the ventral nerve cord, a subset of cholinergic head neurons, anterior sublateral neurons, and body sublateral neurons (at protein level).

The protein localises to the cell membrane. It is found in the perikaryon. The protein resides in the cell projection. It localises to the synapse. Its subcellular location is the cytoplasmic vesicle. The protein localises to the secretory vesicle. It is found in the synaptic vesicle. In terms of biological role, may be involved in trafficking or stabilization of the vesicular acetylcholine transporter unc-17. In Caenorhabditis elegans, this protein is Protein SUP-1.